Reading from the N-terminus, the 400-residue chain is Enolase (400 aa).

Residue Gln153 coordinates (2R)-2-phosphoglycerate. Glu195 serves as the catalytic Proton donor. Residues Asp231, Glu274, and Asp301 each contribute to the Mg(2+) site. Positions 326, 355, 356, and 377 each coordinate (2R)-2-phosphoglycerate. Residue Lys326 is the Proton acceptor of the active site.

The protein belongs to the enolase family. The cofactor is Mg(2+).

The protein localises to the cytoplasm. It is found in the secreted. Its subcellular location is the cell surface. It carries out the reaction (2R)-2-phosphoglycerate = phosphoenolpyruvate + H2O. Its pathway is carbohydrate degradation; glycolysis; pyruvate from D-glyceraldehyde 3-phosphate: step 4/5. In terms of biological role, catalyzes the reversible conversion of 2-phosphoglycerate (2-PG) into phosphoenolpyruvate (PEP). It is essential for the degradation of carbohydrates via glycolysis. This chain is Enolase, found in Halorubrum lacusprofundi (strain ATCC 49239 / DSM 5036 / JCM 8891 / ACAM 34).